The chain runs to 586 residues: MPRVHHSLSNQAFLVLLLFSSIASAAIVEHVLHVKDVVVTPLCKEQMIPIVNGSLPGPTINVREGDTLVVHVINKSTYNVTIHWHGVFQLKSVWMDGANMITQCPIQPSNNFTYQFDITGQEGTLLWHAHVVNLRATIHGALIIRPRSGRPYPFPKPYKEVPLIFQQWWDTDVRLLELRPAPVSDAYLINGLAGDSYPCSKNRMFNLKVVQGKTYLLRIINAALNTHLFFKIANHNVTVVAVDAVYTTPYLTDVMILTPGQTIDAILTADQPIGTYYMAIIPYFSAIGVPASPDTKPTRGLIVYEGATSSSSPTKPWMPPANDIPTAHRFSSNITSLVGGPHWTPVPRHVDEKMFITMGLGLDPCPSNAKCVGPLDQRLAGSLNNRTFMIPERISMQEAYFYNITGVYTDDFPDQPPLKFDFTKFEQHPTNSDMEMMFPERKTSVKTIRFNSTVEIVLQNTGILTPESHPMHLHGFNFYVLGYGFGNYDPIRDARKLNLFNPQMHNTVGVPPGGWVVLRFIANNPGIWLFHCHMDAHLPLGIMMAFIVQNGPTRETSLPSPPSNLPQCTRDPTIYDSRTTNVDMSY.

The first 25 residues, 1 to 25 (MPRVHHSLSNQAFLVLLLFSSIASA), serve as a signal peptide directing secretion. Plastocyanin-like domains lie at 33 to 149 (HVKD…PRSG) and 159 to 307 (KEVP…YEGA). Residues asparagine 52, asparagine 74, and asparagine 79 are each glycosylated (N-linked (GlcNAc...) asparagine). Residues histidine 83 and histidine 85 each coordinate Cu cation. Asparagine 111 is a glycosylation site (N-linked (GlcNAc...) asparagine). Positions 128 and 130 each coordinate Cu cation. Residues asparagine 236, asparagine 333, asparagine 385, asparagine 403, and asparagine 451 are each glycosylated (N-linked (GlcNAc...) asparagine). The Plastocyanin-like 3 domain maps to 411–552 (DFPDQPPLKF…MMAFIVQNGP (142 aa)). Residues histidine 469, histidine 472, histidine 474, histidine 531, cysteine 532, histidine 533, and histidine 537 each contribute to the Cu cation site.

The protein belongs to the multicopper oxidase family. Cu cation is required as a cofactor. In terms of tissue distribution, predominantly expressed in roots.

It is found in the secreted. Its subcellular location is the extracellular space. The protein localises to the apoplast. The catalysed reaction is 4 hydroquinone + O2 = 4 benzosemiquinone + 2 H2O. Its function is as follows. Lignin degradation and detoxification of lignin-derived products. The polypeptide is Laccase-9 (LAC9) (Arabidopsis thaliana (Mouse-ear cress)).